Here is a 198-residue protein sequence, read N- to C-terminus: Guanylate kinase (198 aa).

Residue G2 is modified to N-acetylglycine. The Guanylate kinase-like domain maps to 4-186 (PRPVVLSGPS…AYWALKEALS (183 aa)). 14-19 (GAGKST) is a binding site for ATP. 37-51 (SHTTRDPRPGEENGK) serves as a coordination point for substrate. Residues R44, R137, and R148 contribute to the active site. Residue 171–172 (ND) participates in ATP binding.

It belongs to the guanylate kinase family. In terms of assembly, monomer. Interacts with RD3.

It is found in the photoreceptor inner segment. The protein resides in the cytoplasm. Its subcellular location is the cytosol. The catalysed reaction is GMP + ATP = GDP + ADP. With respect to regulation, up-regulated by RD3. Functionally, catalyzes the phosphorylation of GMP to GDP. Essential enzyme for recycling GMP and indirectly, cyclic GMP (cGMP). Involved in the cGMP metabolism in photoreceptors. This chain is Guanylate kinase (GUK1), found in Sus scrofa (Pig).